We begin with the raw amino-acid sequence, 766 residues long: Sucrose synthase (766 aa).

The segment at 220 to 698 is GT-B glycosyltransferase; that stretch reads MVFNVVILSV…GLLRIKERYT (479 aa).

This sequence belongs to the glycosyltransferase 1 family. Plant sucrose synthase subfamily. As to expression, expressed most predominantly in tap root.

It carries out the reaction an NDP-alpha-D-glucose + D-fructose = a ribonucleoside 5'-diphosphate + sucrose + H(+). In terms of biological role, sucrose-cleaving enzyme that provides UDP-glucose and fructose for various metabolic pathways. This chain is Sucrose synthase (SS1), found in Beta vulgaris (Sugar beet).